The following is a 165-amino-acid chain: Glucosamine 6-phosphate N-acetyltransferase (165 aa).

The 144-residue stretch at 22–165 (FKVRPLAKDD…DDCNFMTQRF (144 aa)) folds into the N-acetyltransferase domain. Substrate contacts are provided by residues Thr-44, 92–95 (KFIH), and 104–106 (EDV). 114-119 (RQKLGA) serves as a coordination point for acetyl-CoA. Substrate-binding positions include 135–136 (YK) and Arg-164.

Belongs to the acetyltransferase family. GNA1 subfamily.

It carries out the reaction D-glucosamine 6-phosphate + acetyl-CoA = N-acetyl-D-glucosamine 6-phosphate + CoA + H(+). It functions in the pathway nucleotide-sugar biosynthesis; UDP-N-acetyl-alpha-D-glucosamine biosynthesis; N-acetyl-alpha-D-glucosamine 1-phosphate from alpha-D-glucosamine 6-phosphate (route I): step 1/2. The protein is Glucosamine 6-phosphate N-acetyltransferase (gna-1) of Caenorhabditis elegans.